The primary structure comprises 306 residues: Glutaminase (306 aa).

Substrate-binding residues include serine 64, asparagine 115, glutamate 159, asparagine 166, tyrosine 190, tyrosine 242, and valine 260.

Belongs to the glutaminase family. In terms of assembly, homotetramer.

The catalysed reaction is L-glutamine + H2O = L-glutamate + NH4(+). The sequence is that of Glutaminase from Aliivibrio salmonicida (strain LFI1238) (Vibrio salmonicida (strain LFI1238)).